The primary structure comprises 232 residues: uncharacterized protein (232 aa).

A helical transmembrane segment spans residues 10 to 32; the sequence is GLTIYLYPVIAWIILVTKIESGL.

The protein localises to the membrane. This is an uncharacterized protein from Archaeoglobus fulgidus (strain ATCC 49558 / DSM 4304 / JCM 9628 / NBRC 100126 / VC-16).